The sequence spans 77 residues: MARRGRPKRRKVCYFTVNKIEKIDYKDVDLLKKFVSERGKILPRRVTGTSAKYQRQLTTAIKRARQIALLPYVTDNN.

It belongs to the bacterial ribosomal protein bS18 family. Part of the 30S ribosomal subunit. Forms a tight heterodimer with protein bS6.

Binds as a heterodimer with protein bS6 to the central domain of the 16S rRNA, where it helps stabilize the platform of the 30S subunit. The chain is Small ribosomal subunit protein bS18 from Halalkalibacterium halodurans (strain ATCC BAA-125 / DSM 18197 / FERM 7344 / JCM 9153 / C-125) (Bacillus halodurans).